A 450-amino-acid polypeptide reads, in one-letter code: NAD-specific glutamate dehydrogenase (450 aa).

3 residues coordinate substrate: Lys-90, Gln-111, and Lys-114. The Proton donor role is filled by Lys-126. Substrate is bound at residue Gly-165. NAD(+) contacts are provided by Thr-210 and Asn-241. Residue Ser-381 coordinates substrate.

The protein belongs to the Glu/Leu/Phe/Val dehydrogenases family. In terms of assembly, homohexamer.

The enzyme catalyses L-glutamate + NAD(+) + H2O = 2-oxoglutarate + NH4(+) + NADH + H(+). It functions in the pathway amino-acid degradation; L-glutamate degradation via hydroxyglutarate pathway; crotonoyl-CoA from L-glutamate: step 1/5. In Clostridium symbiosum (Bacteroides symbiosus), this protein is NAD-specific glutamate dehydrogenase (gdh).